The primary structure comprises 301 residues: Rhodopsin (301 aa).

The Extracellular portion of the chain corresponds to 1–18; the sequence is LHMIHLHWYQYPPMNPMM. A helical transmembrane segment spans residues 19–43; sequence YPLLLIFMLFTGILCLAGNFVTIWV. Topologically, residues 44-55 are cytoplasmic; the sequence is FMNTKSLRTPAN. Residues 56–78 form a helical membrane-spanning segment; that stretch reads LLVVNLAMSDFLMMFTMFPPMMV. At 79-92 the chain is on the extracellular side; the sequence is TCYYHTWTLGPTFC. A disulfide bond links cysteine 92 and cysteine 169. The helical transmembrane segment at 93-115 threads the bilayer; it reads QVYAFLGNLCGCASIWTMVFITF. The short motif at 116–118 is the 'Ionic lock' involved in activated form stabilization element; it reads DRY. At 116-134 the chain is on the cytoplasmic side; that stretch reads DRYNVIVKGVAGEPLSNKK. Residues 135–155 form a helical membrane-spanning segment; sequence AAMWILSVWVLSTAWCMAPFF. The Extracellular portion of the chain corresponds to 156–182; sequence GWNSYVPEGNLTGCGTDYLSEDILSRS. An N-linked (GlcNAc...) asparagine glycan is attached at asparagine 165. A helical membrane pass occupies residues 183–204; the sequence is YLYIYSTWVYFLPLTITIYCYV. The Cytoplasmic segment spans residues 205-245; that stretch reads FIIKAVAAHEKGMRDQAKKMGIKSLRNEEAQKTSAECRLAK. A helical membrane pass occupies residues 246–267; sequence IAMTTVALWFIAWTPYLLINWV. Topologically, residues 268 to 278 are extracellular; that stretch reads GMFARSYLSPV. The helical transmembrane segment at 279 to 300 threads the bilayer; it reads YTIWGYVFAKANAVYNPIVYAI. Lysine 288 carries the post-translational modification N6-(retinylidene)lysine.

This sequence belongs to the G-protein coupled receptor 1 family. Opsin subfamily. In terms of assembly, homodimer. Interacts with GNAQ. In terms of processing, contains one covalently linked retinal chromophore.

The protein localises to the cell projection. It localises to the rhabdomere membrane. Functionally, photoreceptor required for image-forming vision at low light intensity. Can use both retinal and 3-dehydroretinal as visual pigment. Light-induced isomerization of 11-cis to all-trans retinal triggers a conformational change that activates signaling via G-proteins. Signaling via GNAQ probably mediates the activation of phospholipase C. In Faxonius virilis (Virile crayfish), this protein is Rhodopsin (RHO).